The following is an 887-amino-acid chain: Alanine--tRNA ligase (887 aa).

4 residues coordinate Zn(2+): His564, His568, Cys676, and His680.

It belongs to the class-II aminoacyl-tRNA synthetase family. It depends on Zn(2+) as a cofactor.

The protein resides in the cytoplasm. It catalyses the reaction tRNA(Ala) + L-alanine + ATP = L-alanyl-tRNA(Ala) + AMP + diphosphate. Functionally, catalyzes the attachment of alanine to tRNA(Ala) in a two-step reaction: alanine is first activated by ATP to form Ala-AMP and then transferred to the acceptor end of tRNA(Ala). Also edits incorrectly charged Ser-tRNA(Ala) and Gly-tRNA(Ala) via its editing domain. The protein is Alanine--tRNA ligase of Chelativorans sp. (strain BNC1).